The chain runs to 427 residues: Glutamyl-tRNA(Gln) amidotransferase subunit D (427 aa).

The Asparaginase/glutaminase domain maps to 74–407; it reads ERVYIIGAGG…EVVRKMFQRN (334 aa). Residues Thr-84, Thr-160, Asp-161, and Lys-240 contribute to the active site.

It belongs to the asparaginase 1 family. GatD subfamily. In terms of assembly, heterodimer of GatD and GatE.

It carries out the reaction L-glutamyl-tRNA(Gln) + L-glutamine + ATP + H2O = L-glutaminyl-tRNA(Gln) + L-glutamate + ADP + phosphate + H(+). Allows the formation of correctly charged Gln-tRNA(Gln) through the transamidation of misacylated Glu-tRNA(Gln) in organisms which lack glutaminyl-tRNA synthetase. The reaction takes place in the presence of glutamine and ATP through an activated gamma-phospho-Glu-tRNA(Gln). The GatDE system is specific for glutamate and does not act on aspartate. In Aeropyrum pernix (strain ATCC 700893 / DSM 11879 / JCM 9820 / NBRC 100138 / K1), this protein is Glutamyl-tRNA(Gln) amidotransferase subunit D.